We begin with the raw amino-acid sequence, 406 residues long: Argininosuccinate synthase (406 aa).

Residues 11-19 (AYSGGLDTS) and A38 each bind ATP. Residues Y91 and S96 each contribute to the L-citrulline site. Residue G121 participates in ATP binding. L-aspartate contacts are provided by T123, N127, and D128. Residue N127 coordinates L-citrulline. L-citrulline-binding residues include R131, S181, S190, E266, and Y278.

The protein belongs to the argininosuccinate synthase family. Type 1 subfamily. In terms of assembly, homotetramer.

Its subcellular location is the cytoplasm. The enzyme catalyses L-citrulline + L-aspartate + ATP = 2-(N(omega)-L-arginino)succinate + AMP + diphosphate + H(+). The protein operates within amino-acid biosynthesis; L-arginine biosynthesis; L-arginine from L-ornithine and carbamoyl phosphate: step 2/3. This is Argininosuccinate synthase from Campylobacter jejuni (strain RM1221).